The primary structure comprises 4691 residues: Plectin (4691 aa).

The interval 1–1478 (MVAGMLMPLD…SELTTLTSQY (1478 aa)) is globular 1. Arg-21 carries the post-translational modification Phosphoserine. Position 26 is a phosphotyrosine (Val-26). 2 disordered regions span residues 113 to 161 (RSPH…TPVV) and 167 to 186 (GTLARPGPEPAPATDERDRV). Residues 137-154 (DPAREERQVYRRKEREEG) show a composition bias toward basic and acidic residues. The segment at 181 to 411 (DERDRVQKKT…YVSSLYDAMP (231 aa)) is actin-binding. Calponin-homology (CH) domains follow at residues 185–293 (RVQK…LHFQ) and 306–411 (MTAK…DAMP). The Spectrin 1 repeat unit spans residues 653 to 727 (LQSTQRRPEL…ERARNDESQL (75 aa)). Ser-728 is modified (phosphoserine). Spectrin repeat units lie at residues 748-832 (KLLN…REDH) and 845-938 (LQTQ…AIVQ). At Thr-823 the chain carries Phosphothreonine. An SH3 domain is found at 949-1006 (RGHVPLIAVCDYKQVEVTVHKGDQCQLVGPAQPSHWKVLSGSSSEAAVPSVCFLVPPP). Residues 963 to 4572 (VEVTVHKGDQ…ARTAQKLRDV (3610 aa)) form a required for interaction with intermediate filament proteins region. Ser-1055 is subject to Phosphoserine. A Spectrin 4 repeat occupies 1323-1423 (RERVTQLLER…QKFAKQYINA (101 aa)). Ser-1443 bears the Phosphoserine mark. 2 coiled-coil regions span residues 1477–1697 (QYIK…ERRL) and 1729–2764 (SFAE…TTQA). Residues 1479–2762 (IKFISETLRR…ALAHSEIATT (1284 aa)) are central fibrous rod domain. The interval 1626 to 1653 (RAEEAEAQKRQAQEEAERLRRQVQDESQ) is disordered. The residue at position 1729 (Ser-1729) is a Phosphoserine. Position 1733 is an N6-acetyllysine (Lys-1733). 3 disordered regions span residues 1801 to 1835 (SLAQADAEKQKEEAEREARRRGKAEEQAVRQRELA), 2100 to 2141 (AEDT…SLAA), and 2223 to 2317 (RLRS…KHKK). 4 stretches are compositionally biased toward basic and acidic residues: residues 1806-1835 (DAEKQKEEAEREARRRGKAEEQAVRQRELA), 2100-2116 (AEDTMRSKEQAELEAAR), 2124-2136 (EEQRRREAEERVQ), and 2223-2266 (RLRS…KQSA). The span at 2267–2280 (EEQAQAQAQAQAAA) shows a compositional bias: low complexity. The span at 2281–2296 (EKLRKEAEQEAARRAQ) shows a compositional bias: basic and acidic residues. Ser-2639 bears the Phosphoserine mark. Lys-2644 carries the post-translational modification N6-acetyllysine. The interval 2675–2728 (LREEQQRQQQQMEQEKQELMASMEEARRRQREAEEGVRRKQEELQHLEQQRQQQ) is disordered. Basic and acidic residues predominate over residues 2687-2728 (EQEKQELMASMEEARRRQREAEEGVRRKQEELQHLEQQRQQQ). The tract at residues 2763–4691 (QAASTKALPN…SLGGPESAVA (1929 aa)) is globular 2. Ser-2781 carries the phosphoserine modification. Residue Tyr-2788 is modified to Phosphotyrosine. Plectin repeat units lie at residues 2795–2832 (QKVPAQQLQEAGILSQEELQRLAQGHTTVAELTQREDV), 2833–2870 (YRYLKGRSSIAGLLLKPTNEKLSVYTALQRQLLSPGTA), 2871–2908 (LILLEAQAASGFLLDPVRNRRLTVNEAVKEGVVGPELH), 2909–2946 (HKLLSAERAVTGYKDPYTGEQISLFQAMKKDLIVRDHG), 2947–2984 (VRLLEAQIATGGIIDPVHSHRVPVDVAYKRGYFDEEMN), and 2988–3022 (SDPSDDTKGFFDPNTHENLTYLQLLERCVEDPETG). Phosphoserine is present on Ser-2809. The residue at position 2893 (Thr-2893) is a Phosphothreonine. A Phosphotyrosine modification is found at Tyr-3040. N6-acetyllysine occurs at positions 3060 and 3098. Plectin repeat units follow at residues 3123 to 3160 (ALVPAAELLDSGVISHELYQQLQRGERSVREVAEADSV), 3161 to 3198 (RQALRGTNVIAGVWLEEAGQKLSIYEALKKDLLQPEVA), 3199 to 3236 (VALLEAQAGTGHIIDPATSARLTVDEAVRAGLVGPELH), 3237 to 3274 (EKLLSAEKAVTGYRDPYSGQSVSLFQALKKGLIPREQG), 3275 to 3312 (LRLLDAQLSTGGIVDPSKSHRVPLDVAYARGYLDKETN), and 3315 to 3350 (LTSPRDDARVYHDPSTQEPVTYSQLQQRCRSDQLTG). Residues 3312-3326 (NRALTSPRDDARVYH) are compositionally biased toward basic and acidic residues. A disordered region spans residues 3312-3338 (NRALTSPRDDARVYHDPSTQEPVTYSQ). Over residues 3328-3338 (PSTQEPVTYSQ) the composition is skewed to polar residues. Tyr-3369 bears the Phosphotyrosine mark. Lys-3427 bears the N6-acetyllysine mark. 5 Plectin repeats span residues 3492 to 3529 (RTLLQGSGCLAGIYLEDSKEKVTIYEAMRRGLLRPSTA), 3530 to 3567 (TLLLEAQAATGFLVDPVRNQRLYVHEAVKAGVVGPELH), 3568 to 3605 (EKLLSAEKAVTGYKDPYSGNTISLFQAMKKGLVLRDHA), 3606 to 3643 (IRLLEAQVATGGIIDPVHSHRLPVDVAYQRGYFDEEMN), and 3647 to 3681 (ADPSDDTKGFFDPNTHENLTYLQLLERCVEDPETG). Thr-3792 bears the Phosphothreonine mark. Tyr-3797 bears the Phosphotyrosine mark. 5 Plectin repeats span residues 3827-3864 (WRYLYGTGAVAGVYLPGSRQTLTIYQALKKGLLSAEVA), 3865-3902 (RLLLEAQAATGFLLDPVKGERLTVDEAVRKGLVGPELH), 3903-3940 (DRLLSAERAVTGYRDPYTEQTISLFQAMKKELIPAEEA), 3941-3978 (LRLLDAQLATGGIVDPRLGFHLPLEVAYQRGYLNKDTH), and 3982-4015 (SEPSEVRSYVDPSTDERLSYTQLLKRCRRDDPSG). Residues 3954–4291 (VDPRLGFHLP…KRRVVIVDPE (338 aa)) are required for interaction with type2 keratins, DES and VIM. At Thr-4037 the chain carries Phosphothreonine. A Phosphoserine modification is found at Ser-4061. Plectin repeat units follow at residues 4070–4107 (QKFLEGTSCIAGVFVDATKERLSVYQAMKKGIIRPGTA), 4108–4145 (FELLEAQAATGYVIDPIKGLKLTVEEAVRMGIVGPEFK), 4146–4183 (DKLLSAERAVTGYKDPYSGKLISLFQAMKKGLILKDHG), 4184–4221 (IRLLEAQIATGGIIDPEESHRLPVEVAYKRGLFDEEMN), 4225–4259 (TDPSDDTKGFFDPNTEENLTYLQLMERCITDPQTG), and 4272–4312 (RKTS…HQTY). The tract at residues 4257–4307 (QTGLCLLPLKEKKRERKTSSKSSVRKRRVVIVDPETGKEMSVYEAYRKGLI) is binding to intermediate filaments. The tract at residues 4387-4420 (FRSRSSSVGSSSSYPISSAGPRTQLASWSDPTEE) is disordered. Ser-4389, Ser-4391, Ser-4392, Ser-4393, Ser-4396, Ser-4397, Ser-4398, and Ser-4399 each carry phosphoserine. Low complexity predominate over residues 4389 to 4404 (SRSSSVGSSSSYPISS). Phosphotyrosine is present on Tyr-4400. A phosphoserine mark is found at Ser-4403 and Ser-4413. Positions 4406 to 4416 (GPRTQLASWSD) are enriched in polar residues. Plectin repeat units follow at residues 4415-4452 (SDPTEETGPVAGILDTETLEKVSITEAMHRNLVDNITG), 4453-4490 (QRLLEAQACTGGIIDPSTGERFPVTEAVNKGLVDKIMV), 4491-4528 (DRINLAQKAFCGFEDPRTKTKMSAAQALKKGWLYYEAG), 4529-4566 (QRFLEVQYLTGGLIEPDTPGRVSLDEALQRGTVDARTA), and 4567-4604 (QKLRDVSAYSKYLTCPKTKLKISYKDALDRSMVEEGTG). Position 4418 is a phosphothreonine (Thr-4418). The segment at 4503-4572 (FEDPRTKTKM…ARTAQKLRDV (70 aa)) is required for efficient interaction with KRT5 and KRT14 heterodimers. A Phosphothreonine; by CDK1 modification is found at Thr-4546. Ser-4614 and Ser-4620 each carry phosphoserine. Residues 4618-4678 (YYSPYSVSGS…SGYGRRYASG (61 aa)) are compositionally biased toward low complexity. Positions 4618 to 4691 (YYSPYSVSGS…SLGGPESAVA (74 aa)) are disordered. Phosphotyrosine is present on Tyr-4622. 3 positions are modified to phosphoserine: Ser-4623, Ser-4625, and Ser-4629. Residue Thr-4630 is modified to Phosphothreonine. Residues 4632–4647 (GSRTGSRTGSRAGSRR) form a 4 X 4 AA tandem repeats of G-S-R-X region. Ser-4633 is modified (phosphoserine). An omega-N-methylarginine mark is found at Arg-4634 and Arg-4647. Phosphoserine is present on residues Ser-4649 and Ser-4682.

The protein belongs to the plakin or cytolinker family. Homodimer or homotetramer. Interacts (via actin-binding domain) with SYNE3. Interacts (via calponin-homology (CH) 1 domain) with VIM (via rod region). Interacts (via N-terminus) with DST isoform 2 (via N-terminus). Interacts with FER. Interacts with TOR1A. Interacts with ANK3. Identified in complexes that contain VIM, EZR, AHNAK, BFSP1, BFSP2, ANK2, PLEC, PRX and spectrin. As to quaternary structure, interacts with KRT14, heterodimers consisting of KRT8 and KRT18, heterodimers consisting of KRT5 and KRT14, heterodimers consisting of KRT14 and KRT15, and heterodimers consisting of KRT1 and KRT10. Interacts with DES and VIM. In terms of processing, phosphorylated by CDK1; regulates dissociation from intermediate filaments during mitosis. Isoform PLEC-1A is phosphorylated on Ser-21. Isoform PLEC-1A is phosphorylated on Tyr-26. As to expression, detected in eye lens fiber cells (at protein level). Expressed at high levels in lung, brain, small intestine, muscle, heart and skin with lower levels found in kidney, liver, uterus, spleen and salivary gland.

The protein localises to the cytoplasm. It is found in the cytoskeleton. The protein resides in the cell junction. It localises to the hemidesmosome. Its subcellular location is the cell projection. The protein localises to the podosome. Its function is as follows. Interlinks intermediate filaments with microtubules and microfilaments and anchors intermediate filaments to desmosomes or hemidesmosomes. May be involved not only in the cross-linking and stabilization of cytoskeletal intermediate filaments network, but also in the regulation of their dynamics. The protein is Plectin (Plec) of Mus musculus (Mouse).